The primary structure comprises 835 residues: Protein translocase subunit SecA (835 aa).

ATP-binding positions include Gln-85, 103 to 107 (GEGKT), and Asp-492. The tract at residues 788–807 (VQGEAVHPSSDGEEAKKKPV) is disordered. Residues Cys-819, Cys-821, Cys-830, and Cys-831 each coordinate Zn(2+).

Belongs to the SecA family. As to quaternary structure, monomer and homodimer. Part of the essential Sec protein translocation apparatus which comprises SecA, SecYEG and auxiliary proteins SecDF. Other proteins may also be involved. Zn(2+) is required as a cofactor.

The protein localises to the cell membrane. Its subcellular location is the cytoplasm. The catalysed reaction is ATP + H2O + cellular proteinSide 1 = ADP + phosphate + cellular proteinSide 2.. In terms of biological role, part of the Sec protein translocase complex. Interacts with the SecYEG preprotein conducting channel. Has a central role in coupling the hydrolysis of ATP to the transfer of proteins into and across the cell membrane, serving as an ATP-driven molecular motor driving the stepwise translocation of polypeptide chains across the membrane. The protein is Protein translocase subunit SecA of Bacillus cereus (strain ATCC 14579 / DSM 31 / CCUG 7414 / JCM 2152 / NBRC 15305 / NCIMB 9373 / NCTC 2599 / NRRL B-3711).